We begin with the raw amino-acid sequence, 374 residues long: Anhydro-N-acetylmuramic acid kinase (374 aa).

15–22 provides a ligand contact to ATP; the sequence is GTSADGID.

This sequence belongs to the anhydro-N-acetylmuramic acid kinase family.

It carries out the reaction 1,6-anhydro-N-acetyl-beta-muramate + ATP + H2O = N-acetyl-D-muramate 6-phosphate + ADP + H(+). Its pathway is amino-sugar metabolism; 1,6-anhydro-N-acetylmuramate degradation. The protein operates within cell wall biogenesis; peptidoglycan recycling. Catalyzes the specific phosphorylation of 1,6-anhydro-N-acetylmuramic acid (anhMurNAc) with the simultaneous cleavage of the 1,6-anhydro ring, generating MurNAc-6-P. Is required for the utilization of anhMurNAc either imported from the medium or derived from its own cell wall murein, and thus plays a role in cell wall recycling. This is Anhydro-N-acetylmuramic acid kinase from Xanthomonas axonopodis pv. citri (strain 306).